The primary structure comprises 496 residues: MMFINLLLRLMCVFLIGADGQMVQMESSKAGFVGSQVELPCQFVNSNPPVKISQVTWQKLVNGTKQNVAIANPALGVSVLNPFRERVRFKNPAVRQRTPSLEDTTIVFNRLKLTDESTYICEYTTFPAGNRENMVNLTVFARPMIQMSLSTPSIVAGSKDLKMTVATCVSANGKPASVITWETDLDGESNTQEISNPDGTVTVRSDYFVVPSREIHQQLLTCISTYNEEQYTDSVTLNIQYEPEVIIEGFDGNWYLNRENVQLTCLADANPTISLYQWRYLNGTLPSSAELRDDVLIFKGPVTYDIAGTYVCDATNSIGSGSASVEVIVTEFPSYPHEVFQDQQQAGVVIGGAVVCGTVLLAAVTLLVVFLYRRRCMFKGDYSTKKQILGNGYSKAGNVPSHPSLPHSLTFSDDSDEEKKLELYRGSSILGGSVQEFHTCHDSRIKAYRTGLIEEHERCAFNEQTYIYEYGSEVEVSVDMIPQMDGSVISKEEWYV.

The first 20 residues, 1-20 (MMFINLLLRLMCVFLIGADG), serve as a signal peptide directing secretion. At 21-349 (QMVQMESSKA…FQDQQQAGVV (329 aa)) the chain is on the extracellular side. Residues 34 to 138 (GSQVELPCQF…GNRENMVNLT (105 aa)) enclose the Ig-like V-type domain. The cysteines at positions 41 and 121 are disulfide-linked. N-linked (GlcNAc...) asparagine glycans are attached at residues asparagine 62 and asparagine 136. Ig-like C2-type domains lie at 143 to 238 (PMIQ…VTLN) and 243 to 330 (PEVI…VIVT). 2 disulfides stabilise this stretch: cysteine 168/cysteine 222 and cysteine 265/cysteine 312. N-linked (GlcNAc...) asparagine glycosylation occurs at asparagine 282. A helical transmembrane segment spans residues 350-370 (IGGAVVCGTVLLAAVTLLVVF). Topologically, residues 371 to 496 (LYRRRCMFKG…SVISKEEWYV (126 aa)) are cytoplasmic.

This sequence belongs to the nectin family. As to quaternary structure, cis- and trans-homodimer. Can form trans-heterodimers. In terms of tissue distribution, expressed in the developing eye and nervous system.

The protein resides in the cell membrane. The protein localises to the cell junction. Its subcellular location is the adherens junction. Functionally, cell adhesion molecule that promotes cell-cell contacts and plays important roles in the development of the nervous system. Acts by forming homophilic or heterophilic trans-dimers. This is Nectin 1a from Danio rerio (Zebrafish).